We begin with the raw amino-acid sequence, 393 residues long: Staphopain B (393 aa).

Positions 1–36 are cleaved as a signal peptide; the sequence is MNSSYKSRVFNIISIIMVSMLILSLGAFANNNKAKA. A propeptide spanning residues 37 to 219 is cleaved from the precursor; that stretch reads DSHSKQLEIN…KVEENEAIQE (183 aa). Active-site residues include C243, H340, and N360.

The protein belongs to the peptidase C47 family. In the cytoplasm, prematurely activated/folded SspB forms a stable non-covalent complex with SspC. Proteolytically cleaved by staphylococcal serine protease (SspA).

It is found in the secreted. Prematurely activated/folded staphopain B is inhibited by staphostatin B (SspC), which is probably required to protect staphylococcal cytoplasmic proteins from degradation by SspB. In terms of biological role, cysteine protease that plays an important role in the inhibition of host innate immune response. Degrades host elastin, fibrogen, fibronectin and kininogen. Blocks phagocytosis of opsonised S.aureus by neutrophils and monocytes by inducing their death in a proteolytic activity-dependent manner. Decreases surface expression of the 'don't eat me' signal CD31 on neutrophils. Cleaves host galectin-3/LGALS3, thereby inhibiting the neutrophil-activating ability of the lectin. In Staphylococcus aureus (strain MSSA476), this protein is Staphopain B (sspB).